Here is a 410-residue protein sequence, read N- to C-terminus: Monoglucosyldiacylglycerol epimerase (410 aa).

The first 14 residues, 1–14 (MAMAWLMGLGLALA), serve as a signal peptide directing secretion. 2 helical membrane-spanning segments follow: residues 71–91 (ALVMLAFGIWPPLLTWMWQGF) and 96–116 (LILAASAGMVYTLGFLLSAIA). Y320 (proton acceptor) is an active-site residue. A helical membrane pass occupies residues 380 to 400 (IIVTINPITFIAFPVKEFFVS).

This sequence belongs to the short-chain dehydrogenases/reductases (SDR) family.

It localises to the membrane. It catalyses the reaction a 1,2-diacyl-3-O-(beta-D-glucopyranosyl)-sn-glycerol = a 1,2-diacyl-3-O-(beta-D-galactosyl)-sn-glycerol. Involved in the biosynthesis of galactolipids found in the photosynthetic membranes. Catalyzes the isomerization of monoglucosyldiacylglycerol (GlcDG) to yield monogalactosyldiacylglycerol (MGDG). In Synechocystis sp. (strain ATCC 27184 / PCC 6803 / Kazusa), this protein is Monoglucosyldiacylglycerol epimerase.